The chain runs to 328 residues: Malate dehydrogenase (328 aa).

12-18 (GAAGQIA) provides a ligand contact to NAD(+). Arg-93 and Arg-99 together coordinate substrate. Residues Asn-106, Gln-113, and 130-132 (VGN) contribute to the NAD(+) site. Residues Asn-132 and Arg-163 each coordinate substrate. His-188 functions as the Proton acceptor in the catalytic mechanism.

Belongs to the LDH/MDH superfamily. MDH type 2 family.

The catalysed reaction is (S)-malate + NAD(+) = oxaloacetate + NADH + H(+). Its function is as follows. Catalyzes the reversible oxidation of malate to oxaloacetate. The chain is Malate dehydrogenase from Burkholderia cenocepacia (strain ATCC BAA-245 / DSM 16553 / LMG 16656 / NCTC 13227 / J2315 / CF5610) (Burkholderia cepacia (strain J2315)).